The primary structure comprises 216 residues: Somatotropin (216 aa).

The signal sequence occupies residues 1–26 (MATGSQTSWLLTFTLLCLPWPQEAGA). A Zn(2+)-binding site is contributed by His45. Residues Cys78 and Cys189 are joined by a disulfide bond. Residue Ser131 is modified to Phosphoserine. Residue Glu198 participates in Zn(2+) binding. Cys206 and Cys214 are disulfide-bonded.

Belongs to the somatotropin/prolactin family.

It is found in the secreted. Functionally, plays an important role in growth control. Its major role in stimulating body growth is to stimulate the liver and other tissues to secrete IGF1. It stimulates both the differentiation and proliferation of myoblasts. It also stimulates amino acid uptake and protein synthesis in muscle and other tissues. The protein is Somatotropin (GH1) of Spalax ehrenbergi (Middle East blind mole rat).